The following is an 89-amino-acid chain: Small ribosomal subunit protein uS15 (89 aa).

This sequence belongs to the universal ribosomal protein uS15 family. In terms of assembly, part of the 30S ribosomal subunit. Forms a bridge to the 50S subunit in the 70S ribosome, contacting the 23S rRNA.

In terms of biological role, one of the primary rRNA binding proteins, it binds directly to 16S rRNA where it helps nucleate assembly of the platform of the 30S subunit by binding and bridging several RNA helices of the 16S rRNA. Forms an intersubunit bridge (bridge B4) with the 23S rRNA of the 50S subunit in the ribosome. The polypeptide is Small ribosomal subunit protein uS15 (Sodalis glossinidius (strain morsitans)).